Consider the following 375-residue polypeptide: Lipid droplet hydrolase 1 (375 aa).

Residues 88-358 (VFVFVPGLAG…CSHNLCFDRP (271 aa)) enclose the AB hydrolase-1 domain. Residue Ser177 is the Charge relay system of the active site. Residues 373-375 (SKL) carry the Microbody targeting signal motif.

Belongs to the AB hydrolase superfamily. Lipase family.

The protein localises to the lipid droplet. It catalyses the reaction a triacylglycerol + H2O = a diacylglycerol + a fatty acid + H(+). Functionally, serine hydrolase required for the maintenance of steady state level of non-polar and polar lipids of lipid droplets and thus plays a role in maintaining the lipids homeostasis. Exhibits both esterase and triacylglycerol lipase activity. This chain is Lipid droplet hydrolase 1, found in Saccharomyces cerevisiae (strain ATCC 204508 / S288c) (Baker's yeast).